Reading from the N-terminus, the 156-residue chain is Arginine repressor (156 aa).

Belongs to the ArgR family.

It is found in the cytoplasm. It participates in amino-acid biosynthesis; L-arginine biosynthesis [regulation]. Its function is as follows. Regulates arginine biosynthesis genes. This chain is Arginine repressor, found in Shewanella woodyi (strain ATCC 51908 / MS32).